Consider the following 472-residue polypeptide: Succinate-semialdehyde dehydrogenase [NADP(+)] (472 aa).

NADP(+) is bound by residues 134–135 (WN), 158–161 (KHAS), and 210–211 (GS). Glu-232 serves as the catalytic Proton acceptor. Leu-233 serves as a coordination point for NADP(+). Cys-266 (nucleophile) is an active-site residue. Glu-363 is a binding site for NADP(+).

This sequence belongs to the aldehyde dehydrogenase family.

It catalyses the reaction succinate semialdehyde + NADP(+) + H2O = succinate + NADPH + 2 H(+). Its function is as follows. Catalyzes the NADP(+)-dependent oxidation of succinate semialdehyde to succinate. It is believed to be the main source of succinate semialdehyde dehydrogenase activity in Mycobacterium. This is Succinate-semialdehyde dehydrogenase [NADP(+)] (gabD1) from Mycolicibacterium paratuberculosis (strain ATCC BAA-968 / K-10) (Mycobacterium paratuberculosis).